The sequence spans 200 residues: 3-isopropylmalate dehydratase small subunit (200 aa).

Belongs to the LeuD family. LeuD type 1 subfamily. In terms of assembly, heterodimer of LeuC and LeuD.

It carries out the reaction (2R,3S)-3-isopropylmalate = (2S)-2-isopropylmalate. The protein operates within amino-acid biosynthesis; L-leucine biosynthesis; L-leucine from 3-methyl-2-oxobutanoate: step 2/4. Its function is as follows. Catalyzes the isomerization between 2-isopropylmalate and 3-isopropylmalate, via the formation of 2-isopropylmaleate. This is 3-isopropylmalate dehydratase small subunit from Campylobacter jejuni subsp. doylei (strain ATCC BAA-1458 / RM4099 / 269.97).